Here is a 1745-residue protein sequence, read N- to C-terminus: ADAMTS-like protein 1 (1745 aa).

The signal sequence occupies residues 1-28 (MECCRRAAPGTPLLVLAFLLLSSRTARS). The 50-residue stretch at 33–82 (EGLWDAWGPWSECSRTCGGGASYSLRRCLSSKSCEGRNIRYRTCSNVDCP) folds into the TSP type-1 1 domain. 3 disulfide bridges follow: Cys-45/Cys-76, Cys-49/Cys-81, and Cys-60/Cys-66. Asn-251 carries an N-linked (GlcNAc...) asparagine glycan. Ser-310 and Ser-391 each carry an O-linked (Fuc...) serine glycan. 6 consecutive TSP type-1 domains span residues 376-424 (PLPR…MYTP), 436-493 (DCPK…TPCY), 522-584 (EEPS…GPCN), 607-667 (ELYD…DPCP), 703-762 (CPPA…KKDD), and 763-825 (CPSE…ATCA). Thr-451 carries an O-linked (Fuc...) threonine glycan. Cystine bridges form between Cys-534–Cys-578, Cys-538–Cys-583, and Cys-549–Cys-567. Cystine bridges form between Cys-775–Cys-819, Cys-779–Cys-824, Cys-790–Cys-807, and Cys-874–Cys-922. The Ig-like C2-type 1 domain occupies 836–938 (PHIAAARNIY…EQFVIKLIGG (103 aa)). Disordered stretches follow at residues 966–991 (EALQ…GLTA) and 1114–1137 (VSGF…RPHR). Positions 1115 to 1126 (SGFSSSLRSSSG) are enriched in low complexity. 3 Ig-like C2-type domains span residues 1139–1241 (PAIL…IAVT), 1261–1352 (PTVT…TQLL), and 1378–1468 (PSVL…ASLV). 3 cysteine pairs are disulfide-bonded: Cys-1177–Cys-1225, Cys-1283–Cys-1336, and Cys-1401–Cys-1452. 2 TSP type-1 domains span residues 1528-1591 (CPSR…QLCV) and 1649-1709 (CSVH…TPCE). Positions 1709-1745 (ENTECRDTTRYCEKVRQLKLCQLGQFRSRCCGTCGKA) constitute a PLAC domain.

In terms of assembly, monomer. Glycosylated. O-fucosylated by POFUT2 on a serine or a threonine residue found within the consensus sequence C1-X(2)-(S/T)-C2-G of the TSP type-1 repeat domains where C1 and C2 are the first and second cysteine residue of the repeat, respectively. Fucosylated repeats can then be further glycosylated by the addition of a beta-1,3-glucose residue by the glucosyltransferase, B3GALTL. Fucosylation mediates the efficient secretion of ADAMTS family members. Can also be C-glycosylated with one or two mannose molecules on tryptophan residues within the consensus sequence W-X-X-W of the TPRs, and N-glycosylated. These other glycosylations can also facilitate secretion. In terms of processing, disulfide bonds are present.

It localises to the secreted. It is found in the extracellular space. Its subcellular location is the extracellular matrix. This Mus musculus (Mouse) protein is ADAMTS-like protein 1 (Adamtsl1).